Reading from the N-terminus, the 443-residue chain is Glutamyl-tRNA reductase (443 aa).

Substrate is bound by residues 49-52 (TCNR), S109, 114-116 (ETQ), and Q120. C50 functions as the Nucleophile in the catalytic mechanism. 189–194 (GAGEMS) contributes to the NADP(+) binding site.

It belongs to the glutamyl-tRNA reductase family. Homodimer.

It catalyses the reaction (S)-4-amino-5-oxopentanoate + tRNA(Glu) + NADP(+) = L-glutamyl-tRNA(Glu) + NADPH + H(+). Its pathway is porphyrin-containing compound metabolism; protoporphyrin-IX biosynthesis; 5-aminolevulinate from L-glutamyl-tRNA(Glu): step 1/2. In terms of biological role, catalyzes the NADPH-dependent reduction of glutamyl-tRNA(Glu) to glutamate 1-semialdehyde (GSA). The sequence is that of Glutamyl-tRNA reductase from Desulfitobacterium hafniense (strain DSM 10664 / DCB-2).